The primary structure comprises 526 residues: Thymocyte selection-associated high mobility group box protein TOX (526 aa).

Polar residues predominate over residues 194–203 (NMGGTNVAHN). The interval 194 to 264 (NMGGTNVAHN…KKDPNEPQKP (71 aa)) is disordered. Low complexity predominate over residues 209–220 (GSKSATPSPSSS). The segment covering 228 to 245 (DASKINGGEKRPASDMGK) has biased composition (basic and acidic residues). A Nuclear localization signal motif is present at residues 237 to 256 (KRPASDMGKKPKTPKKKKKK). Residues 246 to 256 (KPKTPKKKKKK) show a composition bias toward basic residues. The segment at residues 261–329 (PQKPVSAYAL…EYLKQLAAYR (69 aa)) is a DNA-binding region (HMG box).

It belongs to the high motility group (HMG) box superfamily. As to quaternary structure, interacts with HBO1 complex composed at least of KAT7/HBO1, ING4, MEAF6, and JADE2; this complex is involved in histone acetylation. Interacts with DNMT1, LEO1, PAF1, SAP130 and SIN3A; these interactors regulate chromatin remodeling. Interacts with an array of proteins involved in RNA processing and translation and DNA replication. Expressed in neurons of the subventricular zone (at protein level). Expressed in distinct subpopulations of thymocytes undergoing positive selection: double CD4-positive CD8-positive (DP) cells, CD4-positive CD8-low transitional cells and in single CD4-positive and CD8-positive cells (at protein level). Expressed in ILC progenitors and mature ILC subsets: ILC1, ILC2 and ILC3 (at protein level). Expressed in lymphoid tissue-inducer cells and bone marrow NK cell subsets. Abundant in thymus, liver and brain. Also detected in small intestine, spleen, stomach and testis. Highly expressed in tumor-infiltrating CD8-positive T cells (at protein level).

Its subcellular location is the nucleus. Transcriptional regulator with a major role in neural stem cell commitment and corticogenesis as well as in lymphoid cell development and lymphoid tissue organogenesis. Binds to GC-rich DNA sequences in the proximity of transcription start sites and may alter chromatin structure, modifying access of transcription factors to DNA. During cortical development, controls the neural stem cell pool by inhibiting the switch from proliferative to differentiating progenitors. Beyond progenitor cells, promotes neurite outgrowth in newborn neurons migrating to reach the cortical plate. May activate or repress critical genes for neural stem cell fate such as SOX2, EOMES and ROBO2. Plays an essential role in the development of lymphoid tissue-inducer (LTi) cells, a subset necessary for the formation of secondary lymphoid organs: peripheral lymph nodes and Peyer's patches. Acts as a developmental checkpoint and regulates thymocyte positive selection toward T cell lineage commitment. Required for the development of various T cell subsets, including CD4-positive helper T cells, CD8-positive cytotoxic T cells, regulatory T cells and CD1D-dependent natural killer T (NKT) cells. Required for the differentiation of common lymphoid progenitors (CMP) to innate lymphoid cells (ILC). May regulate the NOTCH-mediated gene program, promoting differentiation of the ILC lineage. Required at the progenitor phase of NK cell development in the bone marrow to specify NK cell lineage commitment. Upon chronic antigen stimulation, diverts T cell development by promoting the generation of exhaustive T cells, while suppressing effector and memory T cell programming. May regulate the expression of genes encoding inhibitory receptors such as PDCD1 and induce the exhaustion program, to prevent the overstimulation of T cells and activation-induced cell death. In Mus musculus (Mouse), this protein is Thymocyte selection-associated high mobility group box protein TOX.